Reading from the N-terminus, the 509-residue chain is ATP synthase subunit alpha (509 aa).

169–176 (GDRQTGKT) contacts ATP.

The protein belongs to the ATPase alpha/beta chains family. In terms of assembly, F-type ATPases have 2 components, CF(1) - the catalytic core - and CF(0) - the membrane proton channel. CF(1) has five subunits: alpha(3), beta(3), gamma(1), delta(1), epsilon(1). CF(0) has three main subunits: a(1), b(2) and c(9-12). The alpha and beta chains form an alternating ring which encloses part of the gamma chain. CF(1) is attached to CF(0) by a central stalk formed by the gamma and epsilon chains, while a peripheral stalk is formed by the delta and b chains.

The protein localises to the cell inner membrane. The enzyme catalyses ATP + H2O + 4 H(+)(in) = ADP + phosphate + 5 H(+)(out). Its function is as follows. Produces ATP from ADP in the presence of a proton gradient across the membrane. The alpha chain is a regulatory subunit. The sequence is that of ATP synthase subunit alpha from Rhizobium etli (strain CIAT 652).